A 578-amino-acid chain; its full sequence is MNSFMSLVRTATIALLLIAFLQNANAVKNLQSIVAYHGAVATDDGRCSAIGTNVLRQGGNAIDASVAAALCLGVVSPASSGIGGGAFTMIKLANGTEVAYDSRETAPLSATEDMYGDNPERKKKGSLSVGVPGEVAGLYTAWTQHGKLPWKQLVEPAEKLAAEGFKISKYLYMQMNATRSDILADKGLSELFVSNGELKKPGAICRNPKLADTLSQIAEYGPKAFYNGTVGFNLVSDIQKAGGIITLKDLQNYNVKVKEPLSTEILGYRLLGMPPPSSGGPAMMLILNILAQYGIPSGVSGPLGVHRLVEALKHAFAVRMNLGDPDFVPEVTNVVADMLSPKFAQDLKSKINDEKTFDPKYYGGKWGQIKDHGTSHLSIIDSERNAVSMTSTINGYFGAIMLSPSTGIVLNNEMDDFSIPTKSGGDPDVPPPAPANFIRPGKRPLSSMTPTIVLKDGKVKAALGASGGMYIIAGTTQVYLNHFFLNMDPLSSVVAPRIYHQLIPNKASYENWTTVYSDHFEIPEEIRLVLEKKGQVLTPIAGGTISQLIVEQSDGKSGGISKLVAVSDPRKGGFPSGY.

A signal peptide spans 1–26; it reads MNSFMSLVRTATIALLLIAFLQNANA. An N-linked (GlcNAc...) asparagine glycan is attached at Asn-94. Arg-103 is an L-glutamate binding site. Residues Asn-176 and Asn-227 are each glycosylated (N-linked (GlcNAc...) asparagine). The active-site Nucleophile is the Thr-374. L-glutamate contacts are provided by residues Thr-392, Asn-394, Glu-413, Asp-416, 446–447, and 467–468; these read SS and GG. The N-linked (GlcNAc...) asparagine glycan is linked to Asn-511.

It belongs to the gamma-glutamyltransferase family. As to expression, expressed in roots, immature trichomes and pollen. In developing siliques, specifically expressed in the embryo, endosperm, outer integument and a small portion of the funiculus.

It is found in the secreted. Its subcellular location is the extracellular space. The protein localises to the apoplast. It catalyses the reaction an N-terminal (5-L-glutamyl)-[peptide] + an alpha-amino acid = 5-L-glutamyl amino acid + an N-terminal L-alpha-aminoacyl-[peptide]. It carries out the reaction glutathione + H2O = L-cysteinylglycine + L-glutamate. The enzyme catalyses an S-substituted glutathione + H2O = an S-substituted L-cysteinylglycine + L-glutamate. The protein operates within sulfur metabolism; glutathione metabolism. In terms of biological role, may be required for glutathione transport into developing seeds. This Arabidopsis thaliana (Mouse-ear cress) protein is Glutathione hydrolase 2 (GGT2).